Reading from the N-terminus, the 239-residue chain is DNA repair protein RecO (239 aa).

This sequence belongs to the RecO family.

Functionally, involved in DNA repair and RecF pathway recombination. The sequence is that of DNA repair protein RecO from Tolumonas auensis (strain DSM 9187 / NBRC 110442 / TA 4).